Consider the following 398-residue polypeptide: Circumsporozoite protein (398 aa).

Residues Met1–Gly23 form the signal peptide. A disordered region spans residues Ala50–Ala110. Residues Pro66 to Leu93 show a composition bias toward basic and acidic residues. Residues Lys81 to Arg89 form a required for the binding to heparan sulfate proteoglycans (HSPGs) on the surface of host hepatocytes region. A region I; contains the proteolytic cleavage site region spans residues Lys92–Pro96. 19 repeat units span residues Ala97 to Glu105, Ala106 to Glu114, Ala115 to Glu123, Ala124 to Glu132, Ala133 to Glu141, Ala142 to Glu150, Ala151 to Ala159, Ala160 to Glu168, Ala169 to Ala177, Ala178 to Glu186, Ala187 to Glu195, Ala196 to Glu204, Ala205 to Ala213, Ala214 to Glu222, Ala223 to Ala231, Ala232 to Ala240, Ala241 to Arg257, Ala258 to Arg274, and Ala275 to Gly291. Residues Ala97–Ala110 show a composition bias toward low complexity. The segment at Ala97 to Ala240 is 16 X 9 AA tandem repeats of A-G-N-N-A-A-[AG]-G-[EA]. Positions Ala241–Gly291 are 3 X 17 AA tandem repeats of A-G-N-N-A-A-A-G-E-A-G-A-G-G-A-G-[RG]. Positions Gly248 to Ala310 are disordered. Residues Ala284 to Ala293 are compositionally biased toward gly residues. Positions Lys324 to Ala376 constitute a TSP type-1 domain. Disulfide bonds link Cys336–Cys370 and Cys340–Cys375. Thr339 carries O-linked (Fuc) threonine glycosylation. Cys375 carries GPI-anchor amidated cysteine lipidation. A propeptide spans Ala376–Asn398 (removed in mature form).

It belongs to the plasmodium circumsporozoite protein family. In terms of processing, during host cell invasion, proteolytically cleaved at the cell membrane in the region I by a papain-like cysteine protease of parasite origin. Cleavage is triggered by the sporozoite contact with highly sulfated heparan sulfate proteoglycans (HSPGs) present on the host hepatocyte cell surface. Cleavage exposes the TSP type-1 (TSR) domain and is required for productive invasion of host hepatocytes but not for adhesion to the host cell membrane. Cleavage is dispensable for sporozoite development in the oocyst, motility and for traversal of host and vector cells. O-glycosylated; maybe by POFUT2.

Its subcellular location is the cell membrane. The protein resides in the cytoplasm. Its function is as follows. Essential sporozoite protein. In the mosquito vector, required for sporozoite development in the oocyst, migration through the vector hemolymph and entry into the vector salivary glands. In the vertebrate host, required for sporozoite migration through the host dermis and infection of host hepatocytes. Binds to highly sulfated heparan sulfate proteoglycans (HSPGs) on the surface of host hepatocytes. In terms of biological role, in the vertebrate host, binds to highly sulfated heparan sulfate proteoglycans (HSPGs) on the surface of host hepatocytes and is required for sporozoite invasion of the host hepatocytes. The chain is Circumsporozoite protein from Plasmodium cynomolgi (strain Ceylon).